Reading from the N-terminus, the 483-residue chain is NADH-quinone oxidoreductase subunit N (483 aa).

13 helical membrane passes run 7–27 (AILTPEIVLSLFAMAGLLGAV), 33–53 (ALASAMCWGTAALFIIMAFYI), 76–96 (FAKITILLSAAAILMISQDYM), 108–128 (VLIILAVVGMMIMVSAGDLIA), 161–181 (FVLGALSSGLLLYGSSLAYGF), 196–216 (GGDMPLGLLFGLVFITAGLAF), 235–255 (PTPITALFATAPKVAAMALFA), 272–292 (IVAFLAVVSMFLGAIAAIGQT), 297–317 (LMAYSSISHMGFALMGLSAGT), 323–343 (AMLIYMAIYVAMNIGTFAFIL), 369–389 (ALAILVMMFSLAGVPPLLGFF), 402–422 (GLVWLAIAGVIASVIGAFYYI), and 442–462 (MGLVPYVGLIAMALVIGLGWV).

Belongs to the complex I subunit 2 family. In terms of assembly, NDH-1 is composed of 14 different subunits. Subunits NuoA, H, J, K, L, M, N constitute the membrane sector of the complex.

It is found in the cell inner membrane. It carries out the reaction a quinone + NADH + 5 H(+)(in) = a quinol + NAD(+) + 4 H(+)(out). NDH-1 shuttles electrons from NADH, via FMN and iron-sulfur (Fe-S) centers, to quinones in the respiratory chain. The immediate electron acceptor for the enzyme in this species is believed to be ubiquinone. Couples the redox reaction to proton translocation (for every two electrons transferred, four hydrogen ions are translocated across the cytoplasmic membrane), and thus conserves the redox energy in a proton gradient. This chain is NADH-quinone oxidoreductase subunit N, found in Jannaschia sp. (strain CCS1).